The sequence spans 167 residues: Phosphopantetheine adenylyltransferase (167 aa).

Position 10 (Ser10) interacts with substrate. Residues 10–11 (SF) and His18 each bind ATP. Substrate contacts are provided by Lys42, Ala79, and Arg93. Residues 94–96 (GLR), Glu104, and 129–135 (VGHITAT) each bind ATP.

The protein belongs to the bacterial CoaD family. As to quaternary structure, homohexamer. It depends on Mg(2+) as a cofactor.

The protein localises to the cytoplasm. The enzyme catalyses (R)-4'-phosphopantetheine + ATP + H(+) = 3'-dephospho-CoA + diphosphate. The protein operates within cofactor biosynthesis; coenzyme A biosynthesis; CoA from (R)-pantothenate: step 4/5. Reversibly transfers an adenylyl group from ATP to 4'-phosphopantetheine, yielding dephospho-CoA (dPCoA) and pyrophosphate. The chain is Phosphopantetheine adenylyltransferase from Methylocella silvestris (strain DSM 15510 / CIP 108128 / LMG 27833 / NCIMB 13906 / BL2).